We begin with the raw amino-acid sequence, 160 residues long: Cytochrome b6-f complex subunit 4 (160 aa).

Transmembrane regions (helical) follow at residues 36 to 56 (LLYVFPIVIMGSFACIVALAV), 95 to 115 (LLGVLAMASVPLGLILVPFIE), and 131 to 151 (TVFLFGTLVTLWLGIGAALPL).

Belongs to the cytochrome b family. PetD subfamily. The 4 large subunits of the cytochrome b6-f complex are cytochrome b6, subunit IV (17 kDa polypeptide, PetD), cytochrome f and the Rieske protein, while the 4 small subunits are PetG, PetL, PetM and PetN. The complex functions as a dimer.

The protein localises to the cellular thylakoid membrane. Functionally, component of the cytochrome b6-f complex, which mediates electron transfer between photosystem II (PSII) and photosystem I (PSI), cyclic electron flow around PSI, and state transitions. This is Cytochrome b6-f complex subunit 4 from Trichormus variabilis (strain ATCC 29413 / PCC 7937) (Anabaena variabilis).